An 833-amino-acid polypeptide reads, in one-letter code: MHQLFRLVLGQKDLSKAGDLFSLDDAEIEDSLTEALEQIKVISSSLDYQTNNNDQAVVEICITRITTAIRETESIEKHARALVGLWDSCLEHNLRPAGKDEDTPHAKIASDIMSCILQNYNRTPVMVLAVPIAVKFLHRGSKELCRNMSNYLSLAAITKADLLADHTEGIIKSILQGNAMLLRVLPAVYEKQPQPINRHLAELLALMSQLEQTEQYHLLRLLHVAAKRKDVEVVQKCVPFLIRNLKDSTYNDIILNILIEIAGHEPLALNSFLPMLKEIAEQFPYLTGQMARIFGAVGHVDEERARSCLRYLVSQLANMEHPFHHILLLEIKSITDAFSSILGPHSRDIFRMSNSFTNIAKLLSRQLENSKADSSRRKTSTEVSIPEKLRELNSMEPESEDHEKLQVKIQAFEDKINAESNTPGSGRRYSLDHISKEERKSIRFSRSRSLALNTVLTNGVSVEDNEVEEKAGMHASISLSQIDPLSHGIGKLPFKTDTHGSPLRNSSASHPSIIHTEPETMPETFKENIQEEILEAATSPIEYQDKLYLHLRENLSKVKAYALEIAKKVPIPDQCTIEDTMRSCVAKLFFTCSLKGHYCLYSKSSFILVSQAPQPWIQVMFLSQQSLFPEPLSIQSGSVQFLKALWEKTQDTGAHSFEVAMTESTFPQQKDLEQLQLHLEEVRFFDVFGFSETAGAWQCFMCNNPEKATVVNQDGQPLIEGKLKEKQVRWKFIKRWKTHYFTLAGNQLLFQKGKSKDDPDDSPIELSKVQSVKAVAKKRRDRSLPRAFEIFTDSKTYVFKAKDEKNAEEWLQCINVALAQAKERESREVTTYL.

Interaction with TGFBR1 regions lie at residues alanine 201–methionine 319 and glutamate 663–leucine 833. In terms of domain architecture, PH spans glutamine 716 to alanine 819.

The protein belongs to the MELT/VEPH family. As to quaternary structure, interacts with TGFBR1. As to expression, specifically expressed in kidney and eye. In the eye, expressed in retinal pigmented epithelium but not in the neural retina.

It is found in the cell membrane. Its function is as follows. Interacts with TGF-beta receptor type-1 (TGFBR1) and inhibits dissociation of activated SMAD2 from TGFBR1, impeding its nuclear accumulation and resulting in impaired TGF-beta signaling. May also affect FOXO, Hippo and Wnt signaling. The polypeptide is Ventricular zone-expressed PH domain-containing protein 1 (Veph1) (Mus musculus (Mouse)).